Reading from the N-terminus, the 236-residue chain is Small ribosomal subunit protein mS41 (236 aa).

It belongs to the mitochondrion-specific ribosomal protein mS41 family. Component of the mitochondrial small ribosomal subunit (mt-SSU). Mature N.crassa 74S mitochondrial ribosomes consist of a small (37S) and a large (54S) subunit. The 37S small subunit contains a 16S ribosomal RNA (16S mt-rRNA) and 32 different proteins. The 54S large subunit contains a 23S rRNA (23S mt-rRNA) and 42 different proteins.

It localises to the mitochondrion. Functionally, component of the mitochondrial ribosome (mitoribosome), a dedicated translation machinery responsible for the synthesis of mitochondrial genome-encoded proteins, including at least some of the essential transmembrane subunits of the mitochondrial respiratory chain. The mitoribosomes are attached to the mitochondrial inner membrane and translation products are cotranslationally integrated into the membrane. In Neurospora crassa (strain ATCC 24698 / 74-OR23-1A / CBS 708.71 / DSM 1257 / FGSC 987), this protein is Small ribosomal subunit protein mS41 (fyv4).